Here is a 122-residue protein sequence, read N- to C-terminus: Protein POLR1D, isoform 2 (122 aa).

Met1 carries the N-acetylmethionine modification. A disordered region spans residues 48 to 122 (INTIKNTLPS…DKYEKRSNRR (75 aa)). Residues 57 to 83 (SHKEQDHEQKEGDKEPAKSQAQKEENP) are compositionally biased toward basic and acidic residues. The segment covering 84–96 (KKHRSHPYKHSFR) has biased composition (basic residues). At Ser104 the chain carries Phosphoserine. Positions 110–122 (SSQDKYEKRSNRR) are enriched in basic and acidic residues.

The protein is Protein POLR1D, isoform 2 (POLR1D) of Homo sapiens (Human).